A 234-amino-acid chain; its full sequence is UPF0502 protein Bphy_5360 (234 aa).

The protein belongs to the UPF0502 family.

In Paraburkholderia phymatum (strain DSM 17167 / CIP 108236 / LMG 21445 / STM815) (Burkholderia phymatum), this protein is UPF0502 protein Bphy_5360.